The sequence spans 215 residues: Protein-L-isoaspartate O-methyltransferase (215 aa).

The active site involves Ser-62.

It belongs to the methyltransferase superfamily. L-isoaspartyl/D-aspartyl protein methyltransferase family.

It localises to the cytoplasm. It catalyses the reaction [protein]-L-isoaspartate + S-adenosyl-L-methionine = [protein]-L-isoaspartate alpha-methyl ester + S-adenosyl-L-homocysteine. Its function is as follows. Catalyzes the methyl esterification of L-isoaspartyl residues in peptides and proteins that result from spontaneous decomposition of normal L-aspartyl and L-asparaginyl residues. It plays a role in the repair and/or degradation of damaged proteins. The sequence is that of Protein-L-isoaspartate O-methyltransferase from Nitratidesulfovibrio vulgaris (strain DSM 19637 / Miyazaki F) (Desulfovibrio vulgaris).